A 489-amino-acid polypeptide reads, in one-letter code: MRLCIPQVLLALFLSMLTAPGEGSRRRATQARDTTQPALLRLSDHLLANYKKGVRPVRDWRKPTTVSIDVIMYAILNVDEKNQVLTTYIWYRQYWTDEFLQWTPEDFDNVTKLSIPTDSIWVPDILINEFVDVGKSPNIPYVYVHHRGEVQNYKPLQLVTACSLDIYNFPFDVQNCSLTFTSWLHTIQDINITLWRSPEEVRSDKSIFINQGEWELLEVFPQFKEFSIDISNSYAEMKFYVIIRRRPLFYAVSLLLPSIFLMVVDIVGFCLPPDSGERVSFKITLLLGYSVFLIIVSDTLPATAIGTPLIGVYFVVCMALLVISLAETIFIVRLVHKQDLQRPVPDWLRHLVLDRIAWILCLGEQPMAHRPPATFQANKTDDCSGSDLLPAMGNHCSHVGGPQDLEKTPRGRGSPLPPPREASLAVRGLLQELSSIRHFLEKRDEMREVARDWLRVGYVLDRLLFRIYLLAVLAYSITLVTLWSIWHYS.

Residues 1–23 (MRLCIPQVLLALFLSMLTAPGEG) form the signal peptide. The Extracellular portion of the chain corresponds to 24 to 246 (SRRRATQARD…MKFYVIIRRR (223 aa)). Asn-109, Asn-175, and Asn-191 each carry an N-linked (GlcNAc...) asparagine glycan. An intrachain disulfide couples Cys-162 to Cys-176. Residues 247-273 (PLFYAVSLLLPSIFLMVVDIVGFCLPP) form a helical membrane-spanning segment. Residues 274–278 (DSGER) are Cytoplasmic-facing. Residues 279 to 297 (VSFKITLLLGYSVFLIIVS) form a helical membrane-spanning segment. The Extracellular segment spans residues 298–307 (DTLPATAIGT). The helical transmembrane segment at 308–326 (PLIGVYFVVCMALLVISLA) threads the bilayer. The Cytoplasmic portion of the chain corresponds to 327–466 (ETIFIVRLVH…GYVLDRLLFR (140 aa)). The interval 425–461 (AVRGLLQELSSIRHFLEKRDEMREVARDWLRVGYVLD) is HA-stretch; determines single-channel conductance in 5-HT3 receptors. A helical membrane pass occupies residues 467 to 486 (IYLLAVLAYSITLVTLWSIW). The Extracellular segment spans residues 487–489 (HYS).

This sequence belongs to the ligand-gated ion channel (TC 1.A.9) family. 5-hydroxytryptamine receptor (TC 1.A.9.2) subfamily. HTR3A sub-subfamily. As to quaternary structure, forms homopentameric as well as heteropentameric serotonin-activated cation-selective channel complexes with HTR3B or HTR3C or HTR3D or HTR3E. The homomeric complex is functional but exhibits low conductance with modified voltage dependence, and decreased agonist and antagonist affinity. Heteropentameric complexes display properties which resemble that of neuronal serotonin-activated channels in vivo. Interacts with RIC3. Brain, spinal cord, and heart.

It is found in the postsynaptic cell membrane. The protein localises to the cell membrane. The enzyme catalyses Na(+)(in) = Na(+)(out). It catalyses the reaction K(+)(in) = K(+)(out). It carries out the reaction Ca(2+)(in) = Ca(2+)(out). The catalysed reaction is Mg(2+)(in) = Mg(2+)(out). Its function is as follows. Forms serotonin (5-hydroxytryptamine/5-HT3)-activated cation-selective channel complexes, which when activated cause fast, depolarizing responses in neurons. The polypeptide is 5-hydroxytryptamine receptor 3A (Mus musculus (Mouse)).